We begin with the raw amino-acid sequence, 316 residues long: Ribosomal RNA small subunit methyltransferase H (316 aa).

S-adenosyl-L-methionine is bound by residues 36-38, D56, F83, D104, and Q111; that span reads GGH.

It belongs to the methyltransferase superfamily. RsmH family.

It localises to the cytoplasm. The enzyme catalyses cytidine(1402) in 16S rRNA + S-adenosyl-L-methionine = N(4)-methylcytidine(1402) in 16S rRNA + S-adenosyl-L-homocysteine + H(+). Specifically methylates the N4 position of cytidine in position 1402 (C1402) of 16S rRNA. This chain is Ribosomal RNA small subunit methyltransferase H, found in Protochlamydia amoebophila (strain UWE25).